Reading from the N-terminus, the 211-residue chain is Transcriptional regulator NarO (211 aa).

Residues 154 to 205 form the HTH bat-type domain; that stretch reads LTARQREVLETAHEMGYFEHPREANATEVAAALDINRSTFTEHLSAAQSKLL.

Functionally, activates transcription of the denitrifying genes (nitrate reductase narA and nitrite reductase nirK) under anaerobic conditions. This Haloferax volcanii (strain ATCC 29605 / DSM 3757 / JCM 8879 / NBRC 14742 / NCIMB 2012 / VKM B-1768 / DS2) (Halobacterium volcanii) protein is Transcriptional regulator NarO.